Here is a 480-residue protein sequence, read N- to C-terminus: Cysteine--tRNA ligase (480 aa).

Residue Cys29 coordinates Zn(2+). Positions 31 to 41 (PTVYSDPHLGH) match the 'HIGH' region motif. Cys220, His245, and Glu249 together coordinate Zn(2+). The short motif at 276-280 (KMAKS) is the 'KMSKS' region element. Lys279 lines the ATP pocket.

The protein belongs to the class-I aminoacyl-tRNA synthetase family. Monomer. It depends on Zn(2+) as a cofactor.

It localises to the cytoplasm. It carries out the reaction tRNA(Cys) + L-cysteine + ATP = L-cysteinyl-tRNA(Cys) + AMP + diphosphate. The protein is Cysteine--tRNA ligase of Thermus thermophilus (strain ATCC BAA-163 / DSM 7039 / HB27).